The primary structure comprises 40 residues: Dolichyl-diphosphooligosaccharide--protein glycosyltransferase subunit 4 (40 aa).

The Lumenal segment spans residues 1–4; sequence MITD. A helical membrane pass occupies residues 5–25; that stretch reads VQLAIFSNVLGVFLFLLVVAY. Over 26 to 40 the chain is Cytoplasmic; it reads HYINANTGKSIIKSK.

Belongs to the OST4 family. Component of the oligosaccharyltransferase (OST) complex.

The protein localises to the endoplasmic reticulum membrane. In terms of biological role, subunit of the oligosaccharyl transferase (OST) complex that catalyzes the initial transfer of a defined glycan (Glc(3)Man(9)GlcNAc(2) in eukaryotes) from the lipid carrier dolichol-pyrophosphate to an asparagine residue within an Asn-X-Ser/Thr consensus motif in nascent polypeptide chains, the first step in protein N-glycosylation. N-glycosylation occurs cotranslationally and the complex associates with the Sec61 complex at the channel-forming translocon complex that mediates protein translocation across the endoplasmic reticulum (ER). All subunits are required for a maximal enzyme activity. In Drosophila grimshawi (Hawaiian fruit fly), this protein is Dolichyl-diphosphooligosaccharide--protein glycosyltransferase subunit 4.